We begin with the raw amino-acid sequence, 469 residues long: Dihydroorotate dehydrogenase (quinone), mitochondrial (469 aa).

Residues 1–37 constitute a mitochondrion transit peptide; that stretch reads MSSSAAALAWRRSLRDALLRGSAWRGAPAANSAAARL. The chain crosses the membrane as a helical span at residues 62 to 82; sequence LLTGAMIGLAIAGGAYVSTAD. FMN is bound by residues 150–154 and Ser-174; that span reads AGFDK. Residue Lys-154 coordinates substrate. Substrate is bound at residue 199–203; sequence NRCGF. Positions 219–247 are disordered; the sequence is HGKRKMEETSSSTSPTTSDVKQGGKAGPG. Over residues 227–236 the composition is skewed to low complexity; it reads TSSSTSPTTS. The FMN site is built by Asn-252 and Asn-283. 283–288 serves as a coordination point for substrate; that stretch reads NVSSPN. The active-site Nucleophile is Ser-286. The FMN site is built by Lys-328 and Ser-356. 357–358 is a substrate binding site; the sequence is NT. Residues Gly-380, Gly-409, and 430–431 contribute to the FMN site; that span reads YT.

Belongs to the dihydroorotate dehydrogenase family. Type 2 subfamily. It depends on FMN as a cofactor.

It localises to the mitochondrion inner membrane. The catalysed reaction is (S)-dihydroorotate + a quinone = orotate + a quinol. Its pathway is pyrimidine metabolism; UMP biosynthesis via de novo pathway; orotate from (S)-dihydroorotate (quinone route): step 1/1. In terms of biological role, catalyzes the conversion of dihydroorotate to orotate with quinone as electron acceptor. This chain is Dihydroorotate dehydrogenase (quinone), mitochondrial (PYRD), found in Oryza sativa subsp. japonica (Rice).